The primary structure comprises 489 residues: MKHVPPTVLVWFRNDLRLHDHEPLHRALKSGLAITAVYCYDPRQFAQTHQGFAKTGPWRSNFLQQSVQNLAESLQKVGNKLLVTTGLPEQVIPQIAKQINAKTIYYHREVTQEELDVERNLVKQLTILGIEAKGYWGSTLCHPEDLPFSIQDLPDLFTKFRKDIEKKKISIRPCFFAPSQLLPSPNIKLELTAPPPEFFPQINFDHRSVLAFQGGETAGLARLQDYFWHGDRLKDYKETRNGMVGADYSSKFSPWLALGCLSPRFIYQEVKRYEQERVSNDSTHWLIFELLWRDFFRFVAQKYGNKLFNRGGLLNKNFPWQEDQVRFELWRSGQTGYPLVDANMRELNLTGFMSNRGRQNVASFLCKNLGIDWRWGAEWFESCLIDYDVCSNWGNWNYTAGIGNDARDFRYFNIPKQSQQYDPQGTYLRHWLPELKNLPGDKIHQPWLLSATEQKQWGVQLGVDYPRPCVNFHQSVEARRKIEQMGVIA.

Residues 6–140 (PTVLVWFRND…EAKGYWGSTL (135 aa)) form the Photolyase/cryptochrome alpha/beta domain.

It belongs to the DNA photolyase class-1 family. It depends on FAD as a cofactor. (6R)-5,10-methylene-5,6,7,8-tetrahydrofolate is required as a cofactor.

In terms of biological role, may have a photoreceptor function. Binds DNA; represses transcription of at least 8 genes, including slr0364 and slr1866. Does not encode a DNA photolyase function. Its disruption does not affect circadian rhythm. In Synechocystis sp. (strain ATCC 27184 / PCC 6803 / Kazusa), this protein is Cryptochrome DASH (cry).